A 478-amino-acid chain; its full sequence is Calcium/calmodulin-dependent protein kinase type II subunit alpha (478 aa).

Position 13 is a phosphotyrosine (Tyr13). The 259-residue stretch at 13-271 (YQLFEELGKG…AAEALKHPWI (259 aa)) folds into the Protein kinase domain. ATP contacts are provided by residues 19 to 27 (LGKGAFSVV) and Lys42. The Proton acceptor role is filled by Asp135. Ser257 carries the phosphoserine modification. At Thr286 the chain carries Phosphothreonine; by autocatalysis. A calmodulin-binding region spans residues 290 to 300 (LKKFNARRKLK). Residues 310-320 (TRNFSGGKSGG) form an interaction with BAALC region. The interval 314-341 (SGGKSGGNKKSDGVKESSESTNTTIEDE) is disordered. Over residues 322-331 (KKSDGVKESS) the composition is skewed to basic and acidic residues. Residues Ser330, Ser331, and Ser333 each carry the phosphoserine modification. Phosphothreonine is present on residues Thr336 and Thr337. Ser404 carries the phosphoserine modification.

The protein belongs to the protein kinase superfamily. CAMK Ser/Thr protein kinase family. CaMK subfamily. As to quaternary structure, there are 4 genes encoding calcium/calmodulin-dependent protein kinase type II chains: CAMK2A, CAMK2B, CAMK2G and CAMK2D. The corresponding proteins assemble into homo- or heteromultimeric holoenzymes composed of 12 subunits with two hexameric rings stacked one on top of the other. Interacts with BAALC. Interacts with MPDZ. Interacts with SYN1. Interacts with CAMK2N2. Interacts with SYNGAP1. Interacts with SYNPO2. Interacts with SHANK3. Interacts with GRIN2B. Interacts with CACNB2. Interacts with LRRC7. Interacts with GRM5. Interacts with DAGLA (via C-terminal); this interaction is enhanced by autophosphorylation of CAMK2A at Thr-286. Interacts with CAMK2N1; this interaction requires CAMK2A activation by Ca(2+). Requires Mg(2+) as cofactor. In terms of processing, autophosphorylation of Thr-286 following activation by Ca(2+)/calmodulin. Phosphorylation of Thr-286 locks the kinase into an activated state. Post-translationally, palmitoylated. Probably palmitoylated by ZDHHC3 and ZDHHC7.

It localises to the synapse. The protein localises to the postsynaptic density. The protein resides in the cell projection. It is found in the dendritic spine. Its subcellular location is the dendrite. The enzyme catalyses L-seryl-[protein] + ATP = O-phospho-L-seryl-[protein] + ADP + H(+). It catalyses the reaction L-threonyl-[protein] + ATP = O-phospho-L-threonyl-[protein] + ADP + H(+). Its activity is regulated as follows. Activated by Ca(2+)/calmodulin. Binding of calmodulin results in conformational change that relieves intrasteric autoinhibition and allows autophosphorylation of Thr-286 which turns the kinase in a constitutively active form and confers to the kinase a Ca(2+)-independent activity. In terms of biological role, calcium/calmodulin-dependent protein kinase that functions autonomously after Ca(2+)/calmodulin-binding and autophosphorylation, and is involved in various processes, such as synaptic plasticity, neurotransmitter release and long-term potentiation. Member of the NMDAR signaling complex in excitatory synapses, it regulates NMDAR-dependent potentiation of the AMPAR and therefore excitatory synaptic transmission. Regulates dendritic spine development. Also regulates the migration of developing neurons. Phosphorylates the transcription factor FOXO3 to activate its transcriptional activity. Phosphorylates the transcription factor ETS1 in response to calcium signaling, thereby decreasing ETS1 affinity for DNA. In response to interferon-gamma (IFN-gamma) stimulation, catalyzes phosphorylation of STAT1, stimulating the JAK-STAT signaling pathway. In response to interferon-beta (IFN-beta) stimulation, stimulates the JAK-STAT signaling pathway. Acts as a negative regulator of 2-arachidonoylglycerol (2-AG)-mediated synaptic signaling via modulation of DAGLA activity. This Pongo abelii (Sumatran orangutan) protein is Calcium/calmodulin-dependent protein kinase type II subunit alpha (CAMK2A).